Here is a 159-residue protein sequence, read N- to C-terminus: 3-hydroxyacyl-[acyl-carrier-protein] dehydratase FabZ (159 aa).

Histidine 58 is an active-site residue.

It belongs to the thioester dehydratase family. FabZ subfamily.

The protein resides in the cytoplasm. It catalyses the reaction a (3R)-hydroxyacyl-[ACP] = a (2E)-enoyl-[ACP] + H2O. Its function is as follows. Involved in unsaturated fatty acids biosynthesis. Catalyzes the dehydration of short chain beta-hydroxyacyl-ACPs and long chain saturated and unsaturated beta-hydroxyacyl-ACPs. The polypeptide is 3-hydroxyacyl-[acyl-carrier-protein] dehydratase FabZ (Helicobacter pylori (strain HPAG1)).